The chain runs to 129 residues: uncharacterized protein (129 aa).

Transmembrane regions (helical) follow at residues 4–24 (FKFLKCVYLCFMVFVRLILII) and 37–57 (VISLLFIILTFLLILGCDLSI).

To B.burgdorferi BBF20.

Its subcellular location is the cell membrane. This is an uncharacterized protein from Borreliella burgdorferi (strain ATCC 35210 / DSM 4680 / CIP 102532 / B31) (Borrelia burgdorferi).